The chain runs to 199 residues: Ribonuclease P protein subunit p25 (199 aa).

Basic and acidic residues predominate over residues 1 to 11 (MENFRKVRSEE). 2 disordered regions span residues 1–28 (MENFRKVRSEEAPAGCGAEGGGPGSGPF) and 144–199 (LDPR…DQTA). Over residues 151 to 166 (YQPPNPHPGPSSPPAA) the composition is skewed to pro residues. Residues S172 and S182 each carry the phosphoserine modification.

Belongs to the histone-like Alba family. In terms of assembly, component of nuclear RNase P and RNase MRP ribonucleoproteins. RNase P consists of a catalytic RNA moiety and 10 different protein chains; POP1, POP4, POP5, POP7, RPP14, RPP21, RPP25, RPP30, RPP38 and RPP40. Within the RNase P complex, POP1, POP7 and RPP25 form the 'finger' subcomplex, POP5, RPP14, RPP40 and homodimeric RPP30 form the 'palm' subcomplex, and RPP21, POP4 and RPP38 form the 'wrist' subcomplex. All subunits of the RNase P complex interact with the catalytic RNA. Several subunits of RNase P are also part of the RNase MRP complex. RNase MRP consists of a catalytic RNA moiety and about 8 protein subunits; POP1, POP7, RPP25, RPP30, RPP38, RPP40 and possibly also POP4 and POP5. POP7 forms a heterodimer with RPP25 that binds to the P3 stem loop of the catalytic RNA.

Its subcellular location is the nucleus. The protein resides in the nucleolus. Functionally, component of ribonuclease P, a ribonucleoprotein complex that generates mature tRNA molecules by cleaving their 5'-ends. Also a component of the MRP ribonuclease complex, which cleaves pre-rRNA sequences. The protein is Ribonuclease P protein subunit p25 (RPP25) of Homo sapiens (Human).